Here is a 210-residue protein sequence, read N- to C-terminus: MTTRVVLGSASSGRLKVLRQAGIEPLVVVSGVDEDAIVAALGAAAPPDQVVCALAAAKAASVVESLPTEVATDCVVIGCDSMLQLDGRLTGKPGTPAAARAQWQQMAGRSGELYTGHCLVRVRDGVAGRREVEAAATTVRFGTPPPADLAAYVDSGEPLGVAGAFTLDGLGGWFLDGVDGDPSNVIGLSLPLVRRMLDRLDLSVPALWTR.

Catalysis depends on Asp-80, which acts as the Proton acceptor.

This sequence belongs to the Maf family. A divalent metal cation serves as cofactor.

Its subcellular location is the cytoplasm. The catalysed reaction is a ribonucleoside 5'-triphosphate + H2O = a ribonucleoside 5'-phosphate + diphosphate + H(+). It carries out the reaction a 2'-deoxyribonucleoside 5'-triphosphate + H2O = a 2'-deoxyribonucleoside 5'-phosphate + diphosphate + H(+). Nucleoside triphosphate pyrophosphatase. May have a dual role in cell division arrest and in preventing the incorporation of modified nucleotides into cellular nucleic acids. The polypeptide is Nucleoside triphosphate pyrophosphatase (Mycobacterium sp. (strain JLS)).